Reading from the N-terminus, the 266-residue chain is Cell wall synthesis protein Wag31 (266 aa).

Residues 31 to 64 adopt a coiled-coil conformation; sequence FLDLVENELTQLIEENSDLRQRIEELDHELAAGG. Position 77 is a phosphothreonine (Thr77). A coiled-coil region spans residues 152–203; it reads TAEATVAEAQQRADAMLADAQTRSEVQSRQAQEKADALQAEAERKHSEIMGA. Positions 239–266 are disordered; it reads ELGQRGSAAPVDSNADAGGFDQFNRGNN.

The protein belongs to the DivIVA family. In terms of assembly, forms homooligomers. Post-translationally, phosphorylated by PknA.

Its subcellular location is the cytoplasm. Functionally, important for maintaining cell shape and cell wall integrity by localizing peptidoglycan synthesis to the cell poles. This chain is Cell wall synthesis protein Wag31 (wag31), found in Mycobacterium leprae (strain TN).